A 393-amino-acid polypeptide reads, in one-letter code: DNA primase small subunit PriS (393 aa).

Residues Asp100, Asp102, and Asp296 contribute to the active site.

The protein belongs to the eukaryotic-type primase small subunit family. As to quaternary structure, heterodimer of a small subunit (PriS) and a large subunit (PriL). Requires Mg(2+) as cofactor. The cofactor is Mn(2+).

Its function is as follows. Catalytic subunit of DNA primase, an RNA polymerase that catalyzes the synthesis of short RNA molecules used as primers for DNA polymerase during DNA replication. The small subunit contains the primase catalytic core and has DNA synthesis activity on its own. Binding to the large subunit stabilizes and modulates the activity, increasing the rate of DNA synthesis while decreasing the length of the DNA fragments, and conferring RNA synthesis capability. The DNA polymerase activity may enable DNA primase to also catalyze primer extension after primer synthesis. May also play a role in DNA repair. This Natronomonas pharaonis (strain ATCC 35678 / DSM 2160 / CIP 103997 / JCM 8858 / NBRC 14720 / NCIMB 2260 / Gabara) (Halobacterium pharaonis) protein is DNA primase small subunit PriS.